The following is a 244-amino-acid chain: Ras-like protein family member 11B (244 aa).

Residues 19–242 (PSSRVIKIAV…VLSAKVRTVT (224 aa)) are small GTPase-like. Residues 30–37 (GGSGVGKT), 77–81 (DTPGV), and 142–145 (NKAD) each bind GTP. Residues 200 to 222 (INATSSVTEKKRSPLIPRPKSPN) form a disordered region.

Belongs to the small GTPase superfamily. Ras family.

The catalysed reaction is GTP + H2O = GDP + phosphate + H(+). The chain is Ras-like protein family member 11B from Danio rerio (Zebrafish).